The following is a 438-amino-acid chain: tRNA wybutosine-synthesizing protein 2 homolog (438 aa).

S-adenosyl-L-methionine contacts are provided by residues Ser-209, Lys-216, Glu-256, and 284-285 (DN).

The protein belongs to the class I-like SAM-binding methyltransferase superfamily. TRM5/TYW2 family.

It carries out the reaction 4-demethylwyosine(37) in tRNA(Phe) + S-adenosyl-L-methionine = 4-demethyl-7-[(3S)-3-amino-3-carboxypropyl]wyosine(37) in tRNA(Phe) + S-methyl-5'-thioadenosine + H(+). Its pathway is tRNA modification; wybutosine-tRNA(Phe) biosynthesis. Its function is as follows. S-adenosyl-L-methionine-dependent transferase that acts as a component of the wybutosine biosynthesis pathway. Wybutosine is a hyper modified guanosine with a tricyclic base found at the 3'-position adjacent to the anticodon of eukaryotic phenylalanine tRNA. Catalyzes the transfer of the alpha-amino-alpha-carboxypropyl (acp) group from S-adenosyl-L-methionine to the C-7 position of 4-demethylwyosine (imG-14) to produce wybutosine-86. This Bos taurus (Bovine) protein is tRNA wybutosine-synthesizing protein 2 homolog (TRMT12).